Reading from the N-terminus, the 284-residue chain is Spermidine/putrescine transport system permease protein PotC homolog (284 aa).

6 consecutive transmembrane segments (helical) span residues 13–33, 76–96, 116–136, 143–163, 189–209, and 242–262; these read YFFL…LVSL, IIIG…SAFA, LATP…NTWL, GFFT…LILI, FFHI…LVVF, and AWAI…VCLI. An ABC transmembrane type-1 domain is found at 72–263; the sequence is LINSIIIGVI…ISVLGVCLIT (192 aa).

This sequence belongs to the binding-protein-dependent transport system permease family. CysTW subfamily.

The protein localises to the cell membrane. In terms of biological role, required for the activity of the bacterial transport system of putrescine and spermidine. This chain is Spermidine/putrescine transport system permease protein PotC homolog (potC), found in Mycoplasma genitalium (strain ATCC 33530 / DSM 19775 / NCTC 10195 / G37) (Mycoplasmoides genitalium).